We begin with the raw amino-acid sequence, 209 residues long: Peptide methionine sulfoxide reductase MsrA (209 aa).

Residue Cys-51 is part of the active site.

The protein belongs to the MsrA Met sulfoxide reductase family.

It carries out the reaction L-methionyl-[protein] + [thioredoxin]-disulfide + H2O = L-methionyl-(S)-S-oxide-[protein] + [thioredoxin]-dithiol. It catalyses the reaction [thioredoxin]-disulfide + L-methionine + H2O = L-methionine (S)-S-oxide + [thioredoxin]-dithiol. Has an important function as a repair enzyme for proteins that have been inactivated by oxidation. Catalyzes the reversible oxidation-reduction of methionine sulfoxide in proteins to methionine. The sequence is that of Peptide methionine sulfoxide reductase MsrA from Vibrio vulnificus (strain CMCP6).